Consider the following 361-residue polypeptide: Homer protein homolog 3 (361 aa).

The interval 1 to 80 (MSTAREQPIF…TKTSQKFGQW (80 aa)) is required for interaction with NFATC2. The WH1 domain occupies 1–113 (MSTAREQPIF…EKFQEVKEAA (113 aa)). The interval 114-169 (RLAREKSQDGGELTSPALGLASHQVPPSPLVSANGPGEEKLFRSQSADAPGPTERE) is disordered. A phosphoserine mark is found at Ser120 and Ser159. Coiled-coil stretches lie at residues 191–243 (ALQD…SEVT) and 254–358 (GQSL…RLAE).

The protein belongs to the Homer family. In terms of assembly, tetramer. Isoform 1 and isoform 2 encode coiled-coil structures that mediate homo- and heteromultimerization. Interacts with NFATC2; interaction is calcium independent; interaction competes with PPP3CA for NFATC2 binding; interaction is reduced by AKT activation. Interacts with NFATC1 and NFATC4. Interacts with SHANK1; forms a high-order complex at least composed of SHANK1 and HOMER3; the complex formation is regulated by CAMK2A-mediated phosphorylation.

The protein resides in the cytoplasm. It is found in the postsynaptic density. Its subcellular location is the synapse. Functionally, postsynaptic density scaffolding protein. Binds and cross-links cytoplasmic regions of GRM1, GRM5, ITPR1, DNM3, RYR1, RYR2, SHANK1 and SHANK3. By physically linking GRM1 and GRM5 with ER-associated ITPR1 receptors, it aids the coupling of surface receptors to intracellular calcium release. Isoforms can be differently regulated and may play an important role in maintaining the plasticity at glutamatergic synapses. Negatively regulates T cell activation by inhibiting the calcineurin-NFAT pathway. Acts by competing with calcineurin/PPP3CA for NFAT protein binding, hence preventing NFAT activation by PPP3CA. The sequence is that of Homer protein homolog 3 from Homo sapiens (Human).